Here is a 182-residue protein sequence, read N- to C-terminus: UPF0301 protein NMCC_1249 (182 aa).

This sequence belongs to the UPF0301 (AlgH) family.

The protein is UPF0301 protein NMCC_1249 of Neisseria meningitidis serogroup C (strain 053442).